Reading from the N-terminus, the 206-residue chain is Max dimerization protein 3 (206 aa).

Residues 8 to 25 (IQVLLQAAEFLERREREA) form an interaction with SIN3A and SIN3B region. One can recognise a bHLH domain in the interval 57-109 (SGRHVHNELEKRRRAQLKRCLEQLRQQMPLGVDHTRYTTLSLLRGARMHIQKL).

As to quaternary structure, efficient DNA binding requires dimerization with another bHLH protein. Binds DNA as a heterodimer with MAX. Interacts with SIN3A AND SIN3B. Interacts with RNF17.

Its subcellular location is the nucleus. Its function is as follows. Transcriptional repressor. Binds with MAX to form a sequence-specific DNA-binding protein complex which recognizes the core sequence 5'-CAC[GA]TG-3'. Antagonizes MYC transcriptional activity by competing for MAX and suppresses MYC dependent cell transformation. This chain is Max dimerization protein 3 (Mxd3), found in Rattus norvegicus (Rat).